A 302-amino-acid polypeptide reads, in one-letter code: Sulfate adenylyltransferase subunit 2 (302 aa).

It belongs to the PAPS reductase family. CysD subfamily. In terms of assembly, heterodimer composed of CysD, the smaller subunit, and CysN.

It carries out the reaction sulfate + ATP + H(+) = adenosine 5'-phosphosulfate + diphosphate. Its pathway is sulfur metabolism; hydrogen sulfide biosynthesis; sulfite from sulfate: step 1/3. Its function is as follows. With CysN forms the ATP sulfurylase (ATPS) that catalyzes the adenylation of sulfate producing adenosine 5'-phosphosulfate (APS) and diphosphate, the first enzymatic step in sulfur assimilation pathway. APS synthesis involves the formation of a high-energy phosphoric-sulfuric acid anhydride bond driven by GTP hydrolysis by CysN coupled to ATP hydrolysis by CysD. The sequence is that of Sulfate adenylyltransferase subunit 2 from Buchnera aphidicola subsp. Acyrthosiphon pisum (strain 5A).